The primary structure comprises 94 residues: MLKPLGDRVVIELVQAEEKTASGIVLPDTAKEKPQEGKVIAVGTGRVLENGERVALEVAAGDLIIFSKYAGTEVKYEGTDYLILRESDILAVIG.

It belongs to the GroES chaperonin family. Heptamer of 7 subunits arranged in a ring. Interacts with the chaperonin GroEL.

It localises to the cytoplasm. Together with the chaperonin GroEL, plays an essential role in assisting protein folding. The GroEL-GroES system forms a nano-cage that allows encapsulation of the non-native substrate proteins and provides a physical environment optimized to promote and accelerate protein folding. GroES binds to the apical surface of the GroEL ring, thereby capping the opening of the GroEL channel. The protein is Co-chaperonin GroES of Bacillus cereus (strain ZK / E33L).